A 244-amino-acid polypeptide reads, in one-letter code: 2,3-bisphosphoglycerate-dependent phosphoglycerate mutase (244 aa).

Substrate-binding positions include 8–15 (RHGESNWN), 21–22 (TG), arginine 60, 87–90 (ERHY), lysine 98, 114–115 (RR), and 181–182 (GN). Catalysis depends on histidine 9, which acts as the Tele-phosphohistidine intermediate. Glutamate 87 serves as the catalytic Proton donor/acceptor.

This sequence belongs to the phosphoglycerate mutase family. BPG-dependent PGAM subfamily.

It carries out the reaction (2R)-2-phosphoglycerate = (2R)-3-phosphoglycerate. It functions in the pathway carbohydrate degradation; glycolysis; pyruvate from D-glyceraldehyde 3-phosphate: step 3/5. Functionally, catalyzes the interconversion of 2-phosphoglycerate and 3-phosphoglycerate. In Frankia alni (strain DSM 45986 / CECT 9034 / ACN14a), this protein is 2,3-bisphosphoglycerate-dependent phosphoglycerate mutase.